A 514-amino-acid polypeptide reads, in one-letter code: Peptide chain release factor 3 (514 aa).

The tr-type G domain occupies 8–268 (KKRRTFAIIS…TFLEFAPEPH (261 aa)). Residues 17 to 24 (SHPDAGKT), 85 to 89 (DTPGH), and 139 to 142 (NKLD) each bind GTP.

This sequence belongs to the TRAFAC class translation factor GTPase superfamily. Classic translation factor GTPase family. PrfC subfamily.

It localises to the cytoplasm. In terms of biological role, increases the formation of ribosomal termination complexes and stimulates activities of RF-1 and RF-2. It binds guanine nucleotides and has strong preference for UGA stop codons. It may interact directly with the ribosome. The stimulation of RF-1 and RF-2 is significantly reduced by GTP and GDP, but not by GMP. The sequence is that of Peptide chain release factor 3 from Streptococcus uberis (strain ATCC BAA-854 / 0140J).